Consider the following 952-residue polypeptide: MSSSEEADLLRLEEVFSTTLARTISLILQPLLLADPEPSDPCGKECLRLLQQLHESAQRLWYVTEQSLLSLRQRLYHPPSKGLEAVLLLSNADHVLQAHMEYIKSYTDCVVAQAFQKVSKKRSEFWRSQRKALRQLLSSGSSEGSVGTTMCQALRQPLSQHVQKYLLLLLSLRDTLDESHPAQELVMHAITLFGNLQSFMGQALDQAVATQALWHSLSSRLRDVLCSPAHRLLQDSQDIPVVVTPLRAERVLLFDDSLVLLQGHNTHTFDLKLVWVKPGQDKCVLHILTPEEEISFCTRDPQGQVVWQWKVTQAVCQALCGKKDFPVLGSGRETSVPPECRCVAYTFCREGRLCQATYDGEWCRAKPHGKGTLKWPDGRNHVGTFYQGLEHGFGICLVPQASEDKFDCYKCHWREGRMCEYGICEYGTDEVYKGYFQAGLRHGFGILESAPQAPQPFRYTGHWERGQRSGYGIEEDRDRGERYIGMWQADQRHGPGVVVTQAGVCYQGTFQGDKMAGPGILLCEDDSLYEGTFTRDLTLLGKGKVTFPNGFTLDGSFSSGTDKGLYTQGVLDTAALPPDPSSTRKRQLGLGTFPVESRWQGVYSPFRDFLRLGCPGEQQEALLGFHTQSSRELRKSQECLCCERSHPEDCVGSMEDTLKELLQHRKPKALQQYLRKALSNSRHPLGQLLRTLMLTFQATYSGIGANKHLQEMAQEEVKQHARELWAAYRGLLKVALQHQGQTLEEENMETRDLQVHGLLLPLILPSFYSELFTLYLLLHEREDGLYSRGITNLSLFPDTKLLEFLDVQKHLWPLKDLKLTSNQRYSLVRDKCFLTATECLQKIITTVHPREKLEVLEKTYGEIEATVSRVLGCKYKLPMDDLLPLLIYVVSRARIQHLGAEIHLIRDMMDPVHTGGLHDFLLTALESCYEHIQKEDMRPHHLPGHWDARDLW.

MORN repeat units lie at residues 358–380, 381–403, 409–431, 432–454, 459–481, 483–505, 506–528, and 529–552; these read YDGE…DGRN, HVGT…QASE, YKCH…TDEV, YKGY…PQAP, YTGH…DRGE, YIGM…AGVC, YQGT…DDSL, and YEGT…NGFT. In terms of domain architecture, VPS9 spans 795 to 941; that stretch reads LFPDTKLLEF…IQKEDMRPHH (147 aa).

As to quaternary structure, homodimer. Forms a heteromeric complex with ALS2. Interacts with ALS2 and RAB5A. Expressed in heart, lung, liver and kidney.

Its subcellular location is the cytoplasm. Functionally, acts as a guanine nucleotide exchange factor (GEF) for Rab5 GTPase. Regulates the ALS2-mediated endosome dynamics. This chain is ALS2 C-terminal-like protein (Als2cl), found in Mus musculus (Mouse).